A 99-amino-acid chain; its full sequence is Nucleoid-associated protein UPA3_0088 (99 aa).

Belongs to the YbaB/EbfC family. As to quaternary structure, homodimer.

Its subcellular location is the cytoplasm. The protein resides in the nucleoid. Its function is as follows. Binds to DNA and alters its conformation. May be involved in regulation of gene expression, nucleoid organization and DNA protection. This Ureaplasma parvum serovar 3 (strain ATCC 27815 / 27 / NCTC 11736) protein is Nucleoid-associated protein UPA3_0088.